The primary structure comprises 412 residues: Serine hydroxymethyltransferase (412 aa).

(6S)-5,6,7,8-tetrahydrofolate is bound by residues Leu117 and Gly121–Leu123. N6-(pyridoxal phosphate)lysine is present on Lys226.

It belongs to the SHMT family. Homodimer. Requires pyridoxal 5'-phosphate as cofactor.

It localises to the cytoplasm. It catalyses the reaction (6R)-5,10-methylene-5,6,7,8-tetrahydrofolate + glycine + H2O = (6S)-5,6,7,8-tetrahydrofolate + L-serine. It functions in the pathway one-carbon metabolism; tetrahydrofolate interconversion. Its pathway is amino-acid biosynthesis; glycine biosynthesis; glycine from L-serine: step 1/1. In terms of biological role, catalyzes the reversible interconversion of serine and glycine with tetrahydrofolate (THF) serving as the one-carbon carrier. This reaction serves as the major source of one-carbon groups required for the biosynthesis of purines, thymidylate, methionine, and other important biomolecules. Also exhibits THF-independent aldolase activity toward beta-hydroxyamino acids, producing glycine and aldehydes, via a retro-aldol mechanism. The chain is Serine hydroxymethyltransferase from Staphylococcus haemolyticus (strain JCSC1435).